A 75-amino-acid chain; its full sequence is Anionic peptide (75 aa).

The first 24 residues, 1–24 (MVSKSLIVLLLVSVLVSTFYTSEA), serve as a signal peptide directing secretion.

The protein belongs to the non-disulfide-bridged peptide (NDBP) superfamily. Expressed by the venom gland.

The protein resides in the secreted. The chain is Anionic peptide from Tityus discrepans (Venezuelan scorpion).